The primary structure comprises 464 residues: Gasdermin-A3 (464 aa).

The interval 1-261 (MPVFEDVTRA…EEPEEEKLIG (261 aa)) is triggers pyroptosis. 9-13 (RALVR) serves as a coordination point for a cardiolipin. The next 4 beta stranded transmembrane spans lie at 78–95 (NFSF…LVEV), 99–120 (VKVK…TLSV), 164–180 (VTVE…SLPS), and 184–198 (LGLQ…AVTI). A coiled-coil region spans residues 255–327 (EEEKLIGEMH…DKGQKVTLEA (73 aa)).

Belongs to the gasdermin family. Homooligomer; homooligomeric ring-shaped pore complex containing 18-36 subunits when inserted in the membrane. In terms of processing, cleavage relieves autoinhibition by releasing the N-terminal moiety (Gasdermin-A3, N-terminal) that initiates pyroptosis. In contrast to Gsdma, not cleaved by bacterial effector protein SpeB. Post-translationally, palmitoylated. Highest levels in skin with weak expression in placenta and testis. Not detected in the gastrointestinal tract. In skin, expressed in postnatal hair follicles and epidermis as well as sebaceous gland basal cells.

Its subcellular location is the cytoplasm. It is found in the cytosol. The protein resides in the cell membrane. It localises to the mitochondrion membrane. With respect to regulation, the full-length protein before cleavage is inactive: intramolecular interactions between N- and C-terminal domains mediate autoinhibition in the absence of activation signal. The intrinsic pyroptosis-inducing activity is carried by the released N-terminal moiety (Gasdermin-A3, N-terminal). In terms of biological role, precursor of a pore-forming protein involved in the transition from catagen to telogen at the end of hair follicle morphogenesis. This form constitutes the precursor of the pore: upon cleavage, the released N-terminal moiety (Gasdermin-A3, N-terminal) binds to membranes and forms pores, triggering pyroptosis. This form acts as a sensor of infection: activation is triggered by cleavage by some bacterial effector protein, which releases the N-terminal moiety (Gasdermin-A3, N-terminal). Its function is as follows. Pore-forming protein that causes membrane permeabilization and pyroptosis. Released upon cleavage by some bacterial effector protein, and binds to membrane inner leaflet lipids. Homooligomerizes within the membrane and forms pores of 10-15 nanometers (nm) of inner diameter, allowing the release of mature interleukin-1 (IL1B and IL18) and triggering pyroptosis. Binds to membrane inner leaflet lipids, including bisphosphorylated phosphatidylinositols, such as phosphatidylinositol (4,5)-bisphosphate, as well as phosphatidylinositol (3,4,5)-bisphosphate, and more weakly to monophosphorylated phosphatidylinositols. Also binds to bacterial and mitochondrial lipids, including cardiolipin, and exhibits bactericidal activity. Plays a role in the transition from catagen to telogen at the end of hair follicle morphogenesis, possibly by regulating hair follicle stem cell niche maintenance. Also required for mammary gland development. The chain is Gasdermin-A3 from Mus musculus (Mouse).